The sequence spans 260 residues: Probable histidinol-phosphatase (260 aa).

This sequence belongs to the PHP hydrolase family. HisK subfamily.

It carries out the reaction L-histidinol phosphate + H2O = L-histidinol + phosphate. The protein operates within amino-acid biosynthesis; L-histidine biosynthesis; L-histidine from 5-phospho-alpha-D-ribose 1-diphosphate: step 8/9. The chain is Probable histidinol-phosphatase (hisK) from Deinococcus radiodurans (strain ATCC 13939 / DSM 20539 / JCM 16871 / CCUG 27074 / LMG 4051 / NBRC 15346 / NCIMB 9279 / VKM B-1422 / R1).